Reading from the N-terminus, the 628-residue chain is Glutamyl-tRNA(Gln) amidotransferase subunit E (628 aa).

This sequence belongs to the GatB/GatE family. GatE subfamily. In terms of assembly, heterodimer of GatD and GatE.

It catalyses the reaction L-glutamyl-tRNA(Gln) + L-glutamine + ATP + H2O = L-glutaminyl-tRNA(Gln) + L-glutamate + ADP + phosphate + H(+). Allows the formation of correctly charged Gln-tRNA(Gln) through the transamidation of misacylated Glu-tRNA(Gln) in organisms which lack glutaminyl-tRNA synthetase. The reaction takes place in the presence of glutamine and ATP through an activated gamma-phospho-Glu-tRNA(Gln). The GatDE system is specific for glutamate and does not act on aspartate. This Sulfurisphaera tokodaii (strain DSM 16993 / JCM 10545 / NBRC 100140 / 7) (Sulfolobus tokodaii) protein is Glutamyl-tRNA(Gln) amidotransferase subunit E.